A 477-amino-acid polypeptide reads, in one-letter code: Aspartyl/glutamyl-tRNA(Asn/Gln) amidotransferase subunit B (477 aa).

It belongs to the GatB/GatE family. GatB subfamily. As to quaternary structure, heterotrimer of A, B and C subunits.

It catalyses the reaction L-glutamyl-tRNA(Gln) + L-glutamine + ATP + H2O = L-glutaminyl-tRNA(Gln) + L-glutamate + ADP + phosphate + H(+). The catalysed reaction is L-aspartyl-tRNA(Asn) + L-glutamine + ATP + H2O = L-asparaginyl-tRNA(Asn) + L-glutamate + ADP + phosphate + 2 H(+). Allows the formation of correctly charged Asn-tRNA(Asn) or Gln-tRNA(Gln) through the transamidation of misacylated Asp-tRNA(Asn) or Glu-tRNA(Gln) in organisms which lack either or both of asparaginyl-tRNA or glutaminyl-tRNA synthetases. The reaction takes place in the presence of glutamine and ATP through an activated phospho-Asp-tRNA(Asn) or phospho-Glu-tRNA(Gln). This is Aspartyl/glutamyl-tRNA(Asn/Gln) amidotransferase subunit B from Coxiella burnetii (strain CbuG_Q212) (Coxiella burnetii (strain Q212)).